The primary structure comprises 500 residues: Protein FAM114A2 (500 aa).

The disordered stretch occupies residues 1–82 (MSNKDDLETA…AAGKETVSKD (82 aa)). 3 positions are modified to phosphoserine: Ser-93, Ser-152, and Ser-215.

The protein belongs to the FAM114 family.

The protein is Protein FAM114A2 (FAM114A1) of Bos taurus (Bovine).